The primary structure comprises 238 residues: Ribose-5-phosphate isomerase A (238 aa).

Substrate is bound by residues 30–33 (SGST), 87–90 (DGAD), and 100–103 (KGGG). The active-site Proton acceptor is Glu109. Substrate is bound at residue Lys127.

It belongs to the ribose 5-phosphate isomerase family. Homodimer.

It catalyses the reaction aldehydo-D-ribose 5-phosphate = D-ribulose 5-phosphate. It participates in carbohydrate degradation; pentose phosphate pathway; D-ribose 5-phosphate from D-ribulose 5-phosphate (non-oxidative stage): step 1/1. Its function is as follows. Catalyzes the reversible conversion of ribose-5-phosphate to ribulose 5-phosphate. This is Ribose-5-phosphate isomerase A from Synechococcus sp. (strain CC9311).